A 547-amino-acid chain; its full sequence is G protein-coupled receptor associated sorting protein 3 (547 aa).

Over residues 1–10 (MAGTKNKTRA) the composition is skewed to basic residues. Disordered stretches follow at residues 1–32 (MAGT…EATG) and 80–102 (TLGK…STCK).

This sequence belongs to the GPRASP family. As to quaternary structure, homodimer. As to expression, highly expressed in brain. Not expressed in lung or liver. Down-regulated in brain from patients suffering from Alzheimer disease.

It localises to the cytoplasm. It is found in the nucleus. In terms of biological role, survival and differentiation promoting protein that plays a role in the regulation of neurosynaptogenesis. Induces phosphatase PP2A activity which results in APP dephosphorylation and inhibits BACE1-mediated processing of APP. This is G protein-coupled receptor associated sorting protein 3 from Homo sapiens (Human).